A 747-amino-acid polypeptide reads, in one-letter code: UPF0313 protein PA4928 (747 aa).

A Radical SAM core domain is found at 371-640 (AYEMIRFSVN…KSDQQRRLHK (270 aa)). [4Fe-4S] cluster contacts are provided by cysteine 385, cysteine 389, and cysteine 392. Positions 670–747 (GKHHLVPTYQ…KKSRQPNIPR (78 aa)) are disordered.

It belongs to the UPF0313 family. Requires [4Fe-4S] cluster as cofactor.

The chain is UPF0313 protein PA4928 from Pseudomonas aeruginosa (strain ATCC 15692 / DSM 22644 / CIP 104116 / JCM 14847 / LMG 12228 / 1C / PRS 101 / PAO1).